The primary structure comprises 1035 residues: Potassium-transporting ATPase alpha chain 1 (1035 aa).

The disordered stretch occupies residues M1–E41. Topologically, residues M1–P98 are cytoplasmic. Phosphotyrosine is present on residues Y7 and Y10. Positions M26–K40 are enriched in basic residues. The residue at position 27 (S27) is a Phosphoserine. The chain crosses the membrane as a helical span at residues E99 to A119. Residues A120–Y142 are Lumenal-facing. The helical transmembrane segment at L143–F163 threads the bilayer. Over K164–I299 the chain is Cytoplasmic. A helical transmembrane segment spans residues E300 to I319. Residues V320 to A331 lie on the Lumenal side of the membrane. The chain crosses the membrane as a helical span at residues M332–A349. The K(+) site is built by V340, A341, V343, and E345. At T350–L783 the chain is on the cytoplasmic side. D387 acts as the 4-aspartylphosphate intermediate in catalysis. Mg(2+) is bound by residues D387 and T389. 2 positions are modified to phosphoserine: S463 and S601. The Mg(2+) site is built by D728 and D732. A helical transmembrane segment spans residues K784–I803. E797 contacts K(+). The Lumenal portion of the chain corresponds to Y804 to L813. A helical membrane pass occupies residues G814–A834. K(+) is bound at residue E822. The Cytoplasmic portion of the chain corresponds to Y835 to R854. At S840 the chain carries Phosphoserine. Residues L855–F877 form a helical membrane-spanning segment. Residues T878–C929 lie on the Lumenal side of the membrane. Residues Y930 to K949 form a helical membrane-spanning segment. Residues T950–N963 are Cytoplasmic-facing. S954 carries the post-translational modification Phosphoserine; by PKA. Residues K964–Y982 traverse the membrane as a helical segment. Topologically, residues C983–F997 are lumenal. A helical transmembrane segment spans residues Q998–K1018. The Cytoplasmic segment spans residues L1019 to Y1035.

The protein belongs to the cation transport ATPase (P-type) (TC 3.A.3) family. Type IIC subfamily. The gastric H(+)/K(+) ATPase pump is composed of the catalytic alpha subunit ATP4A and the regulatory beta subunit ATP4B. Interacts (via the P-domain) with ATP4B (via N-terminus); this interaction stabilizes the lumenal-open E2 conformation state and prevents the reverse reaction of the transport cycle. As to expression, expressed in gastric parietal cells (at protein level).

The protein resides in the apical cell membrane. The enzyme catalyses K(+)(out) + ATP + H2O + H(+)(in) = K(+)(in) + ADP + phosphate + 2 H(+)(out). In terms of biological role, the catalytic subunit of the gastric H(+)/K(+) ATPase pump which transports H(+) ions in exchange for K(+) ions across the apical membrane of parietal cells. Uses ATP as an energy source to pump H(+) ions to the gastric lumen while transporting K(+) ion from the lumen into the cell. Remarkably generates a million-fold proton gradient across the gastric parietal cell membrane, acidifying the gastric juice down to pH 1. Within a transport cycle, the transfer of a H(+) ion across the membrane is coupled to ATP hydrolysis and is associated with a transient phosphorylation that shifts the pump conformation from inward-facing (E1) to outward-facing state (E2). The release of the H(+) ion in the stomach lumen is followed by binding of K(+) ion converting the pump conformation back to the E1 state. In Homo sapiens (Human), this protein is Potassium-transporting ATPase alpha chain 1.